The following is a 383-amino-acid chain: Forkhead box protein I3-B (383 aa).

Residues 1–12 are compositionally biased toward polar residues; sequence MTSYESQGQSPT. Disordered regions lie at residues 1–55, 215–277, and 317–348; these read MTSY…YELG, DNGN…PCLS, and TTGF…SPSH. Residues 25–35 show a composition bias toward low complexity; that stretch reads PPELSLYSDSY. Positions 130–224 form a DNA-binding region, fork-head; that stretch reads RPPYSYSALI…DNGNFRRKRK (95 aa). The Nuclear localization signal signature appears at 220-226; the sequence is RRKRKRK. Residues 234 to 249 show a composition bias toward low complexity; the sequence is SSSGGNESGDSNGRGS. Residues 250-277 are compositionally biased toward polar residues; it reads PKSQSIDISTSPEKGPSPASTGPSPCLS. Residues 317–330 show a composition bias toward low complexity; the sequence is TTGFSTFTPSTTVS.

In terms of tissue distribution, expressed in ionocyte precursors.

Its subcellular location is the nucleus. Transcription factor required for epithelial cell differentiation. Involved in specification of skin ionocytes from epidermal precursors. The sequence is that of Forkhead box protein I3-B from Danio rerio (Zebrafish).